We begin with the raw amino-acid sequence, 278 residues long: UPF0276 protein Shew_2240 (278 aa).

The protein belongs to the UPF0276 family.

This chain is UPF0276 protein Shew_2240, found in Shewanella loihica (strain ATCC BAA-1088 / PV-4).